Here is a 451-residue protein sequence, read N- to C-terminus: COBRA-like protein 6 (451 aa).

The N-terminal stretch at 1–21 (MAVLGSLLLLILAATLSVAVA) is a signal peptide. Residues Asn30, Asn155, Asn163, Asn202, Asn227, Asn323, Asn338, and Asn357 are each glycosylated (N-linked (GlcNAc...) asparagine). The GPI-anchor amidated asparagine moiety is linked to residue Asn426. Positions 427-451 (AAPPAAASLVGSAVAMAALVFFLMA) are cleaved as a propeptide — removed in mature form.

Belongs to the COBRA family.

The protein localises to the cell membrane. Involved in determining the orientation of cell expansion, probably by playing an important role in cellulose deposition. May act by recruiting cellulose synthesizing complexes to discrete positions on the cell surface. The protein is COBRA-like protein 6 (BC1L7) of Oryza sativa subsp. japonica (Rice).